The primary structure comprises 268 residues: MKNKNTDPMQGHRARKRFGQNFLEDQGIINAIVRSIGPKASDNLVEIGPGKGAITAQLIESCPSMQVVELDRDLIPILLAQFAIYNDFRIHQTDALKFDFGQLATPERPLRVVGNLPYNISTPLIFHLLSFGELIADMHFMLQKEVVLRLAAGPGDKNYGRLSVMTQYVCQVENLFEVPPECFNPRPKVDSAIVRLTPYRTQPFVAAHPDKLAKLVKTAFAQRRKTLRNNLKNLDEELDLEALDIDLTRRAESLSLEEYVNLSNTLWP.

S-adenosyl-L-methionine is bound by residues Asn-21, Leu-23, Gly-48, Glu-69, Asp-94, and Asn-115.

It belongs to the class I-like SAM-binding methyltransferase superfamily. rRNA adenine N(6)-methyltransferase family. RsmA subfamily.

It is found in the cytoplasm. It carries out the reaction adenosine(1518)/adenosine(1519) in 16S rRNA + 4 S-adenosyl-L-methionine = N(6)-dimethyladenosine(1518)/N(6)-dimethyladenosine(1519) in 16S rRNA + 4 S-adenosyl-L-homocysteine + 4 H(+). Its function is as follows. Specifically dimethylates two adjacent adenosines (A1518 and A1519) in the loop of a conserved hairpin near the 3'-end of 16S rRNA in the 30S particle. May play a critical role in biogenesis of 30S subunits. This Saccharophagus degradans (strain 2-40 / ATCC 43961 / DSM 17024) protein is Ribosomal RNA small subunit methyltransferase A.